A 658-amino-acid chain; its full sequence is ATP-dependent zinc metalloprotease FtsH 4 (658 aa).

The disordered stretch occupies residues 1–22; that stretch reads MREPTNRQGSPGPGEPRPPAQG. The Cytoplasmic segment spans residues 1-28; that stretch reads MREPTNRQGSPGPGEPRPPAQGRPRFPT. A helical transmembrane segment spans residues 29–49; sequence WILWVALLALALWNVYTFFWP. Residues 50-149 lie on the Extracellular side of the membrane; the sequence is SSGARLNIPY…TVKIDQAGGS (100 aa). A disordered region spans residues 95–114; that stretch reads QVLSPGDPVPPGTSPNEIRT. Residues 150-170 form a helical membrane-spanning segment; that stretch reads VWPSLLATIVPLFLFIGLMVY. Residues 171–658 are Cytoplasmic-facing; sequence LGRSMSRGQQ…AAPAAAADSV (488 aa). Residue 243–250 participates in ATP binding; sequence GPPGTGKT. A Zn(2+)-binding site is contributed by H464. E465 is a catalytic residue. 2 residues coordinate Zn(2+): H468 and D540.

This sequence in the central section; belongs to the AAA ATPase family. It in the C-terminal section; belongs to the peptidase M41 family. Homohexamer. The cofactor is Zn(2+).

It localises to the cell membrane. Functionally, acts as a processive, ATP-dependent zinc metallopeptidase for both cytoplasmic and membrane proteins. Plays a role in the quality control of integral membrane proteins. The sequence is that of ATP-dependent zinc metalloprotease FtsH 4 (ftsh4) from Sphaerobacter thermophilus (strain ATCC 49802 / DSM 20745 / KCCM 41009 / NCIMB 13125 / S 6022).